The primary structure comprises 149 residues: Large ribosomal subunit protein uL13 (149 aa).

It belongs to the universal ribosomal protein uL13 family. As to quaternary structure, part of the 50S ribosomal subunit.

Functionally, this protein is one of the early assembly proteins of the 50S ribosomal subunit, although it is not seen to bind rRNA by itself. It is important during the early stages of 50S assembly. This is Large ribosomal subunit protein uL13 from Chlorobium luteolum (strain DSM 273 / BCRC 81028 / 2530) (Pelodictyon luteolum).